Reading from the N-terminus, the 161-residue chain is Ubiquitin-conjugating enzyme 15 (161 aa).

One can recognise a UBC core domain in the interval 15-161 (IACNRLQKEL…TRWWFHDDKV (147 aa)). The active-site Glycyl thioester intermediate is C99.

The protein belongs to the ubiquitin-conjugating enzyme family.

The catalysed reaction is S-ubiquitinyl-[E1 ubiquitin-activating enzyme]-L-cysteine + [E2 ubiquitin-conjugating enzyme]-L-cysteine = [E1 ubiquitin-activating enzyme]-L-cysteine + S-ubiquitinyl-[E2 ubiquitin-conjugating enzyme]-L-cysteine.. It functions in the pathway protein modification; protein ubiquitination. Functionally, accepts the ubiquitin from the E1 complex and catalyzes its covalent attachment to other proteins. The polypeptide is Ubiquitin-conjugating enzyme 15 (UBC15) (Arabidopsis thaliana (Mouse-ear cress)).